A 130-amino-acid chain; its full sequence is Protein ApaG (130 aa).

The ApaG domain maps to 3–127 (SAMTRSINIL…FSLDSPHAKR (125 aa)).

The chain is Protein ApaG from Parvibaculum lavamentivorans (strain DS-1 / DSM 13023 / NCIMB 13966).